Here is a 148-residue protein sequence, read N- to C-terminus: Large-conductance mechanosensitive channel (148 aa).

Helical transmembrane passes span 16-36 (VMDL…VNSI) and 89-109 (GSFI…FLMV).

This sequence belongs to the MscL family. As to quaternary structure, homopentamer.

Its subcellular location is the cell inner membrane. Channel that opens in response to stretch forces in the membrane lipid bilayer. May participate in the regulation of osmotic pressure changes within the cell. This chain is Large-conductance mechanosensitive channel, found in Paraburkholderia xenovorans (strain LB400).